The primary structure comprises 153 residues: 3-hydroxyacyl-[acyl-carrier-protein] dehydratase FabZ (153 aa).

Residue His-54 is part of the active site.

The protein belongs to the thioester dehydratase family. FabZ subfamily.

It is found in the cytoplasm. The enzyme catalyses a (3R)-hydroxyacyl-[ACP] = a (2E)-enoyl-[ACP] + H2O. Functionally, involved in unsaturated fatty acids biosynthesis. Catalyzes the dehydration of short chain beta-hydroxyacyl-ACPs and long chain saturated and unsaturated beta-hydroxyacyl-ACPs. In Chlamydia trachomatis serovar L2 (strain ATCC VR-902B / DSM 19102 / 434/Bu), this protein is 3-hydroxyacyl-[acyl-carrier-protein] dehydratase FabZ.